The following is a 238-amino-acid chain: Ribonuclease PH (238 aa).

Phosphate-binding positions include R86 and 124–126; that span reads GTR.

It belongs to the RNase PH family. In terms of assembly, homohexameric ring arranged as a trimer of dimers.

It catalyses the reaction tRNA(n+1) + phosphate = tRNA(n) + a ribonucleoside 5'-diphosphate. Its function is as follows. Phosphorolytic 3'-5' exoribonuclease that plays an important role in tRNA 3'-end maturation. Removes nucleotide residues following the 3'-CCA terminus of tRNAs; can also add nucleotides to the ends of RNA molecules by using nucleoside diphosphates as substrates, but this may not be physiologically important. Probably plays a role in initiation of 16S rRNA degradation (leading to ribosome degradation) during starvation. The chain is Ribonuclease PH from Haemophilus influenzae (strain PittGG).